The following is a 314-amino-acid chain: E3 ubiquitin-protein ligase SINA-like 11 (314 aa).

Residues 1-12 (MEDSNSHPQNQT) show a composition bias toward polar residues. Residues 1–31 (MEDSNSHPQNQTSKRKSSHPQKKQRMENETR) form a disordered region. A compositionally biased stretch (basic residues) spans 13–23 (SKRKSSHPQKK). The segment at 43-81 (CPVCFEPLTIPTFQCDDGHIVCNFCFAKVSNKCPGPGCD) adopts an RING-type; degenerate zinc-finger fold. The SBD stretch occupies residues 95-280 (VLESAFVPCQ…PANEVQQVTI (186 aa)). The SIAH-type zinc-finger motif lies at 98–156 (SAFVPCQNTEFGCTKSVSYEKVSSHEKECNYSQCSCPNLECNYTGSYNIIYGHFMRRHL). Zn(2+)-binding residues include cysteine 103, cysteine 110, histidine 122, cysteine 126, cysteine 133, cysteine 138, histidine 150, and histidine 155.

Belongs to the SINA (Seven in absentia) family.

The catalysed reaction is S-ubiquitinyl-[E2 ubiquitin-conjugating enzyme]-L-cysteine + [acceptor protein]-L-lysine = [E2 ubiquitin-conjugating enzyme]-L-cysteine + N(6)-ubiquitinyl-[acceptor protein]-L-lysine.. It participates in protein modification; protein ubiquitination. E3 ubiquitin-protein ligase that mediates ubiquitination and subsequent proteasomal degradation of target proteins. E3 ubiquitin ligases accept ubiquitin from an E2 ubiquitin-conjugating enzyme in the form of a thioester and then directly transfers the ubiquitin to targeted substrates. It probably triggers the ubiquitin-mediated degradation of different substrates. This chain is E3 ubiquitin-protein ligase SINA-like 11, found in Arabidopsis thaliana (Mouse-ear cress).